The primary structure comprises 473 residues: Siroheme synthase (473 aa).

A precorrin-2 dehydrogenase /sirohydrochlorin ferrochelatase region spans residues 1 to 222; sequence MNTQPHHSSP…GDESRADARL (222 aa). Residues 37-38 and 58-59 contribute to the NAD(+) site; these read EI and EK. Positions 233–473 are uroporphyrinogen-III C-methyltransferase; it reads GEVWLVGAGP…QVVRHRVVSP (241 aa). Proline 242 is an S-adenosyl-L-methionine binding site. The active-site Proton acceptor is the aspartate 265. The Proton donor role is filled by lysine 287. S-adenosyl-L-methionine contacts are provided by residues 318–320, isoleucine 323, 348–349, methionine 401, and glycine 430; these read GGD and SA.

The protein in the N-terminal section; belongs to the precorrin-2 dehydrogenase / sirohydrochlorin ferrochelatase family. In the C-terminal section; belongs to the precorrin methyltransferase family.

The catalysed reaction is uroporphyrinogen III + 2 S-adenosyl-L-methionine = precorrin-2 + 2 S-adenosyl-L-homocysteine + H(+). It catalyses the reaction precorrin-2 + NAD(+) = sirohydrochlorin + NADH + 2 H(+). The enzyme catalyses siroheme + 2 H(+) = sirohydrochlorin + Fe(2+). It participates in cofactor biosynthesis; adenosylcobalamin biosynthesis; precorrin-2 from uroporphyrinogen III: step 1/1. It functions in the pathway cofactor biosynthesis; adenosylcobalamin biosynthesis; sirohydrochlorin from precorrin-2: step 1/1. The protein operates within porphyrin-containing compound metabolism; siroheme biosynthesis; precorrin-2 from uroporphyrinogen III: step 1/1. Its pathway is porphyrin-containing compound metabolism; siroheme biosynthesis; siroheme from sirohydrochlorin: step 1/1. It participates in porphyrin-containing compound metabolism; siroheme biosynthesis; sirohydrochlorin from precorrin-2: step 1/1. Multifunctional enzyme that catalyzes the SAM-dependent methylations of uroporphyrinogen III at position C-2 and C-7 to form precorrin-2 via precorrin-1. Then it catalyzes the NAD-dependent ring dehydrogenation of precorrin-2 to yield sirohydrochlorin. Finally, it catalyzes the ferrochelation of sirohydrochlorin to yield siroheme. This Gluconobacter oxydans (strain 621H) (Gluconobacter suboxydans) protein is Siroheme synthase.